Consider the following 380-residue polypeptide: uncharacterized protein (380 aa).

The 32-residue stretch at 287-318 (LRPKIYQDKCKNCRECLVEKYCPTFAIKRENG) folds into the 4Fe-4S ferredoxin-type domain.

This is an uncharacterized protein from Methanocaldococcus jannaschii (strain ATCC 43067 / DSM 2661 / JAL-1 / JCM 10045 / NBRC 100440) (Methanococcus jannaschii).